A 98-amino-acid polypeptide reads, in one-letter code: Putative protein adenylyltransferase MJ0126 (98 aa).

The GSX(10)DXD motif motif lies at 31-45; sequence GSYARNEQTETSDID. Mg(2+) contacts are provided by aspartate 43, aspartate 45, and aspartate 75.

The protein belongs to the MntA antitoxin family. In terms of assembly, probably forms a complex with cognate toxin MJ0125. Requires Mg(2+) as cofactor.

The enzyme catalyses L-tyrosyl-[protein] + ATP = O-(5'-adenylyl)-L-tyrosyl-[protein] + diphosphate. It catalyses the reaction O-(5'-adenylyl)-L-tyrosyl-[protein] + ATP = O-[5'-(adenylyl-(5'-&gt;3')-adenylyl)]-L-tyrosyl-[protein] + diphosphate. In terms of biological role, probable antitoxin component of a putative type VII toxin-antitoxin (TA) system. Neutralizes cognate toxic MJ0125 by di-AMPylation. This Methanocaldococcus jannaschii (strain ATCC 43067 / DSM 2661 / JAL-1 / JCM 10045 / NBRC 100440) (Methanococcus jannaschii) protein is Putative protein adenylyltransferase MJ0126.